The primary structure comprises 126 residues: MSDLHIPGTQSTPAIQGDWQAGRLSMQGDSYPENSYELFGQVIDWVERFLADGQRPLELDLRLLYLNTSSIKAMMDILDLLEEAHQGGRPVSLRWHYDRRNERVAELAEEFREDCSFPFAIQAHDE.

Residue Thr68 is modified to Phosphothreonine.

This is an uncharacterized protein from Pseudomonas aeruginosa (strain UCBPP-PA14).